Consider the following 124-residue polypeptide: uncharacterized protein (124 aa).

In terms of assembly, interacts with dil1.

This is an uncharacterized protein from Schizosaccharomyces pombe (strain 972 / ATCC 24843) (Fission yeast).